Here is a 609-residue protein sequence, read N- to C-terminus: Protein KINESIN LIGHT CHAIN-RELATED 1 (609 aa).

The interval M1–P77 is disordered. Low complexity predominate over residues K38 to S55. TPR repeat units lie at residues A140–T173, F183–T216, G225–H258, A267–G301, A307–S340, A349–P382, A392–K425, A433–A466, G474–E507, and L516–K549. Residues L582 to F609 form a disordered region.

The protein belongs to the kinesin light chain family. In terms of assembly, interacts with IQD1.

It is found in the cytoplasm. It localises to the cytoskeleton. The polypeptide is Protein KINESIN LIGHT CHAIN-RELATED 1 (Arabidopsis thaliana (Mouse-ear cress)).